Here is a 122-residue protein sequence, read N- to C-terminus: S-adenosylmethionine decarboxylase proenzyme (122 aa).

The Schiff-base intermediate with substrate; via pyruvic acid role is filled by S69. S69 is modified (pyruvic acid (Ser); by autocatalysis). Catalysis depends on H74, which acts as the Proton acceptor; for processing activity. The Proton donor; for catalytic activity role is filled by C89.

This sequence belongs to the prokaryotic AdoMetDC family. Type 1 subfamily. In terms of assembly, heterotetramer of two alpha and two beta chains arranged as a dimer of alpha/beta heterodimers. Pyruvate is required as a cofactor. Post-translationally, is synthesized initially as an inactive proenzyme. Formation of the active enzyme involves a self-maturation process in which the active site pyruvoyl group is generated from an internal serine residue via an autocatalytic post-translational modification. Two non-identical subunits are generated from the proenzyme in this reaction, and the pyruvate is formed at the N-terminus of the alpha chain, which is derived from the carboxyl end of the proenzyme. The post-translation cleavage follows an unusual pathway, termed non-hydrolytic serinolysis, in which the side chain hydroxyl group of the serine supplies its oxygen atom to form the C-terminus of the beta chain, while the remainder of the serine residue undergoes an oxidative deamination to produce ammonia and the pyruvoyl group blocking the N-terminus of the alpha chain.

The enzyme catalyses S-adenosyl-L-methionine + H(+) = S-adenosyl 3-(methylsulfanyl)propylamine + CO2. It participates in amine and polyamine biosynthesis; S-adenosylmethioninamine biosynthesis; S-adenosylmethioninamine from S-adenosyl-L-methionine: step 1/1. Functionally, catalyzes the decarboxylation of S-adenosylmethionine to S-adenosylmethioninamine (dcAdoMet), the propylamine donor required for the synthesis of the polyamines spermine and spermidine from the diamine putrescine. The polypeptide is S-adenosylmethionine decarboxylase proenzyme (Sulfurisphaera tokodaii (strain DSM 16993 / JCM 10545 / NBRC 100140 / 7) (Sulfolobus tokodaii)).